A 743-amino-acid polypeptide reads, in one-letter code: Sulfhydryl oxidase 1 (743 aa).

Residues 1-42 (MWRRRARSGGGGGGGGGGAAPRCRWWPAVLALLAAALPAARS) form the signal peptide. Positions 43–166 (RSLYSPSDPL…LRRAIITNLE (124 aa)) constitute a Thioredoxin domain. Catalysis depends on nucleophile residues C80 and C83. Intrachain disulfides connect C80–C83 and C111–C120. N254, N288, N295, N371, and N401 each carry an N-linked (GlcNAc...) asparagine glycan. An intrachain disulfide couples C407 to C419. The 104-residue stretch at 410–513 (SEPHFRGYPC…EDPQFPKLQW (104 aa)) folds into the ERV/ALR sulfhydryl oxidase domain. Residues R415, W422, H426, E461, H465, 488-495 (WSHHNEVN), K510, and W513 each bind FAD. Cysteines 459 and 462 form a disulfide. Residues C519 and C522 are joined by a disulfide bond. The interval 567 to 617 (ASARLSTAGLREKEEEERKEEEEEGEKETEKPHREGETGRPGSSELRRPSI) is disordered. Over residues 580–593 (EEEERKEEEEEGEK) the composition is skewed to acidic residues. The segment covering 594 to 604 (ETEKPHREGET) has biased composition (basic and acidic residues). Residues 707–727 (SLCIALYFLSSMCLLGMYTFF) form a helical membrane-spanning segment.

This sequence belongs to the quiescin-sulfhydryl oxidase (QSOX) family. Requires FAD as cofactor. Post-translationally, N-glycosylated. O-glycosylated on Thr and Ser residues.

The protein localises to the golgi apparatus membrane. It is found in the secreted. The catalysed reaction is 2 R'C(R)SH + O2 = R'C(R)S-S(R)CR' + H2O2. Functionally, catalyzes the oxidation of sulfhydryl groups in peptide and protein thiols to disulfides with the reduction of oxygen to hydrogen peroxide. Plays a role in disulfide bond formation in a variety of extracellular proteins. In fibroblasts, required for normal incorporation of laminin into the extracellular matrix, and thereby for normal cell-cell adhesion and cell migration. The protein is Sulfhydryl oxidase 1 (QSOX1) of Gallus gallus (Chicken).